Here is a 749-residue protein sequence, read N- to C-terminus: Protein Niban 2 (749 aa).

Glycine 2 carries N-myristoyl glycine lipidation. The PH domain maps to 68–192 (RIIFSGNLFQ…WQAVLQDCVR (125 aa)). A phosphoserine mark is found at serine 568, serine 574, serine 607, serine 628, serine 647, serine 650, serine 669, serine 674, serine 685, serine 695, and serine 699. Residues 589 to 749 (WGEQYGDSGD…EDSAGVQTEF (161 aa)) are disordered. Basic and acidic residues predominate over residues 710-719 (VDLEPPKPSD). Residues 723–749 (GEQVSSPGSRPPIHTTTEDSAGVQTEF) are compositionally biased toward polar residues.

The protein belongs to the Niban family. In terms of processing, as apoptosis proceeds, degraded via an proteasome-independent pathway, probably by caspases.

Its subcellular location is the cytoplasm. It localises to the cytosol. The protein localises to the cell junction. The protein resides in the adherens junction. It is found in the membrane. May play a role in apoptosis suppression. The protein is Protein Niban 2 of Mus musculus (Mouse).